Reading from the N-terminus, the 606-residue chain is NADH-ubiquinone oxidoreductase chain 5 (606 aa).

16 helical membrane passes run 4–24 (FPSL…TTTI), 38–58 (NIIS…IHSG), 87–107 (MIFV…SMWY), 114–134 (ITQF…LVTA), 140–160 (LFIG…WWYG), 171–191 (AILY…WFLF), 213–233 (LMGL…HPWL), 241–261 (TPVS…FLLI), 273–293 (VQTF…ICAL), 301–320 (IIAF…IGIN), 325–347 (AFLH…GSII), 366–386 (MPFT…MPFL), 409–429 (LLIT…MIFF), 457–477 (LLIG…PTTI), 488–508 (LTAL…SLAT), and 583–603 (LIKL…LLLM).

The protein belongs to the complex I subunit 5 family. Core subunit of respiratory chain NADH dehydrogenase (Complex I) which is composed of 45 different subunits.

The protein resides in the mitochondrion inner membrane. The enzyme catalyses a ubiquinone + NADH + 5 H(+)(in) = a ubiquinol + NAD(+) + 4 H(+)(out). Its function is as follows. Core subunit of the mitochondrial membrane respiratory chain NADH dehydrogenase (Complex I) which catalyzes electron transfer from NADH through the respiratory chain, using ubiquinone as an electron acceptor. Essential for the catalytic activity and assembly of complex I. This Ceratotherium simum (White rhinoceros) protein is NADH-ubiquinone oxidoreductase chain 5 (MT-ND5).